The sequence spans 193 residues: Ion-translocating oxidoreductase complex subunit A (193 aa).

Transmembrane regions (helical) follow at residues 5 to 25 (LLLF…FLGL), 39 to 59 (MGMG…AWLI), 63 to 83 (ILIP…VIAV), 102 to 122 (LLGI…VALL), 134 to 154 (ALYG…FAAI), and 171 to 191 (AIAL…NGLV).

It belongs to the NqrDE/RnfAE family. The complex is composed of six subunits: RsxA, RsxB, RsxC, RsxD, RsxE and RsxG.

The protein localises to the cell inner membrane. Part of a membrane-bound complex that couples electron transfer with translocation of ions across the membrane. Required to maintain the reduced state of SoxR. In Shigella sonnei (strain Ss046), this protein is Ion-translocating oxidoreductase complex subunit A.